The chain runs to 529 residues: GMP synthase [glutamine-hydrolyzing] (529 aa).

The region spanning 3 to 204 is the Glutamine amidotransferase type-1 domain; it reads TVAIVDFGSQ…FLKIAGCTRD (202 aa). Catalysis depends on cysteine 87, which acts as the Nucleophile. Active-site residues include histidine 179 and glutamate 181. One can recognise a GMPS ATP-PPase domain in the interval 205-395; it reads WTMGSFLHTQ…LGLPSAILDR (191 aa). An ATP-binding site is contributed by 232–238; the sequence is SGGVDSS.

In terms of assembly, homodimer.

The catalysed reaction is XMP + L-glutamine + ATP + H2O = GMP + L-glutamate + AMP + diphosphate + 2 H(+). The protein operates within purine metabolism; GMP biosynthesis; GMP from XMP (L-Gln route): step 1/1. Its function is as follows. Catalyzes the synthesis of GMP from XMP. This Anaplasma marginale (strain St. Maries) protein is GMP synthase [glutamine-hydrolyzing].